A 289-amino-acid polypeptide reads, in one-letter code: YLVNPAAYAALGAYMFLLILIGFPINFLTLYVTLEHKKLRTPLNYILLNLAVGNLFMVLGGFTTTMYTSMHGYFVLGRLGCNLEGFFATLGGEIALWSLVVLAIERWIVVCKPISKFRFTEDHAIMGLAFSWVMGLACAVPPLVGWSRYIPEGMKCSCGVDYYTRAEGFNNESFVIYMFIVHFLIPLSVIFFCYGRLLCAVKEAAAAQQESETTQRAEKEVSRMVVIMVIGFLVCWLPYASVAWWIFCNQGSDFGPIFMTLPSFFAKRPAIYNPMIYICMNKQFRHCMI.

The Extracellular segment spans residues 1–7 (YLVNPAA). A helical transmembrane segment spans residues 8-32 (YAALGAYMFLLILIGFPINFLTLYV). Residues 33–44 (TLEHKKLRTPLN) lie on the Cytoplasmic side of the membrane. The chain crosses the membrane as a helical span at residues 45–67 (YILLNLAVGNLFMVLGGFTTTMY). At 68-81 (TSMHGYFVLGRLGC) the chain is on the extracellular side. Cysteine 81 and cysteine 158 are oxidised to a cystine. The helical transmembrane segment at 82 to 104 (NLEGFFATLGGEIALWSLVVLAI) threads the bilayer. The 'Ionic lock' involved in activated form stabilization signature appears at 105 to 107 (ERW). Residues 105–123 (ERWIVVCKPISKFRFTEDH) lie on the Cytoplasmic side of the membrane. A helical transmembrane segment spans residues 124–144 (AIMGLAFSWVMGLACAVPPLV). At 145-173 (GWSRYIPEGMKCSCGVDYYTRAEGFNNES) the chain is on the extracellular side. Asparagine 171 is a glycosylation site (N-linked (GlcNAc...) asparagine). The chain crosses the membrane as a helical span at residues 174–195 (FVIYMFIVHFLIPLSVIFFCYG). Topologically, residues 196 to 223 (RLLCAVKEAAAAQQESETTQRAEKEVSR) are cytoplasmic. Residues 224–245 (MVVIMVIGFLVCWLPYASVAWW) form a helical membrane-spanning segment. Residues 246 to 257 (IFCNQGSDFGPI) are Extracellular-facing. The helical transmembrane segment at 258 to 279 (FMTLPSFFAKRPAIYNPMIYIC) threads the bilayer. Lysine 267 carries the post-translational modification N6-(retinylidene)lysine. Over 280 to 289 (MNKQFRHCMI) the chain is Cytoplasmic.

Belongs to the G-protein coupled receptor 1 family. Opsin subfamily. In terms of processing, phosphorylated on some or all of the serine and threonine residues present in the C-terminal region. Post-translationally, contains one covalently linked retinal chromophore.

The protein resides in the membrane. Its subcellular location is the cell projection. The protein localises to the cilium. It is found in the photoreceptor outer segment. In terms of biological role, photoreceptor required for image-forming vision at low light intensity. While most salt water fish species use retinal as chromophore, most freshwater fish use 3-dehydroretinal, or a mixture of retinal and 3-dehydroretinal. Light-induced isomerization of 11-cis to all-trans retinal triggers a conformational change that activates signaling via G-proteins. Subsequent receptor phosphorylation mediates displacement of the bound G-protein alpha subunit by arrestin and terminates signaling. In Cottinella boulengeri (Short-headed sculpin), this protein is Rhodopsin (rho).